The following is a 1382-amino-acid chain: Hepatocyte growth factor receptor (1382 aa).

The first 24 residues, 1–24 (MRAPAVLAPGILVLLFTLVQRSCG), serve as a signal peptide directing secretion. Residues 25–933 (ECKEALVKSE…VIVQPDQNFT (909 aa)) lie on the Extracellular side of the membrane. Residues 27–516 (KEALVKSEMN…TGKKITKIPL (490 aa)) form the Sema domain. Asn-45 carries N-linked (GlcNAc...) asparagine glycosylation. Cystine bridges form between Cys-95–Cys-101, Cys-98–Cys-160, Cys-133–Cys-141, and Cys-173–Cys-176. N-linked (GlcNAc...) asparagine glycosylation is present at Asn-106. 2 N-linked (GlcNAc...) asparagine glycosylation sites follow: Asn-203 and Asn-359. Intrachain disulfides connect Cys-299–Cys-364 and Cys-386–Cys-398. Residues Asn-400 and Asn-406 are each glycosylated (N-linked (GlcNAc...) asparagine). 4 disulfide bridges follow: Cys-521–Cys-539, Cys-527–Cys-562, Cys-530–Cys-546, and Cys-542–Cys-552. IPT/TIG domains are found at residues 564–656 (PTIY…FSYV), 658–740 (PIIT…FSYQ), and 743–837 (PIVY…LIYV). Thr-583 carries an O-linked (Man) threonine glycan. Residues Asn-608 and Asn-636 are each glycosylated (N-linked (GlcNAc...) asparagine). O-linked (Man) threonine glycosylation is found at Thr-677 and Thr-762. Residues Asn-786, Asn-880, and Asn-931 are each glycosylated (N-linked (GlcNAc...) asparagine). A helical transmembrane segment spans residues 934 to 956 (GLIVGVISISLIVLLLLGLFLWL). Over 957-1382 (KRRKQIKDLG…QDIIDGEGDT (426 aa)) the chain is Cytoplasmic. Ser-967 carries the phosphoserine modification. A Phosphothreonine modification is found at Thr-978. Phosphoserine is present on residues Ser-991, Ser-998, and Ser-1001. Residue Tyr-1004 is modified to Phosphotyrosine. Residues 1079–1346 (VHFNEVIGRG…RISAIFSTFI (268 aa)) enclose the Protein kinase domain. Residues 1085–1093 (IGRGHFGCV) and Lys-1111 contribute to the ATP site. Catalysis depends on Asp-1205, which acts as the Proton acceptor. The segment at 1213-1382 (LDEKFTVKVA…QDIIDGEGDT (170 aa)) is interaction with RANBP9. Position 1231 is a phosphotyrosine (Tyr-1231). Phosphotyrosine; by autocatalysis occurs at positions 1235 and 1236. A Phosphothreonine modification is found at Thr-1290. The interaction with MUC20 stretch occupies residues 1321–1360 (WHPKAELRPSFSELVSRISAIFSTFIGEHYVHVNATYVNV). Phosphotyrosine; by autocatalysis is present on residues Tyr-1350 and Tyr-1357. Position 1366 is a phosphotyrosine (Tyr-1366).

Belongs to the protein kinase superfamily. Tyr protein kinase family. Heterodimer made of an alpha chain (50 kDa) and a beta chain (145 kDa) which are disulfide linked. Binds PLXNB1. Interacts when phosphorylated with downstream effectors including STAT3, PIK3R1, SRC, PCLG1, GRB2 and GAB1. Interacts with SPSB1, SPSB2 and SPSB4. Interacts with INPP5D/SHIP1. When phosphorylated at Tyr-1357, interacts with INPPL1/SHIP2. Interacts with RANBP9 and RANBP10, as well as SPSB1, SPSB2, SPSB3 and SPSB4. SPSB1 binding occurs in the presence and in the absence of HGF, however HGF treatment has a positive effect on this interaction. Interacts with MUC20; prevents interaction with GRB2 and suppresses hepatocyte growth factor-induced cell proliferation. Interacts with GRB10. Interacts with PTPN1 and PTPN2. Interacts with HSP90AA1 and HSP90AB1; the interaction suppresses MET kinase activity. Interacts with tensin TNS3. Interacts (when phosphorylated) with tensin TNS4 (via SH2 domain); the interaction increases MET protein stability by inhibiting MET endocytosis and subsequent lysosomal degradation. In terms of processing, autophosphorylated in response to ligand binding on Tyr-1235 and Tyr-1236 in the kinase domain leading to further phosphorylation of Tyr-1350 and Tyr-1357 in the C-terminal multifunctional docking site. Dephosphorylated by PTPRJ at Tyr-1350 and Tyr-1366. Dephosphorylated by PTPN1 and PTPN2. Ubiquitinated. Ubiquitination by CBL regulates the receptor stability and activity through proteasomal degradation. Post-translationally, O-mannosylation of IPT/TIG domains by TMEM260 is required for protein maturation. O-mannosylated residues are composed of single mannose glycans that are not elongated or modified.

The protein resides in the membrane. The enzyme catalyses L-tyrosyl-[protein] + ATP = O-phospho-L-tyrosyl-[protein] + ADP + H(+). In its inactive state, the C-terminal tail interacts with the catalytic domain and inhibits the kinase activity. Upon ligand binding, the C-terminal tail is displaced and becomes phosphorylated, thus increasing the kinase activity. Functionally, receptor tyrosine kinase that transduces signals from the extracellular matrix into the cytoplasm by binding to hepatocyte growth factor/HGF ligand. Regulates many physiological processes including proliferation, scattering, morphogenesis and survival. Ligand binding at the cell surface induces autophosphorylation of MET on its intracellular domain that provides docking sites for downstream signaling molecules. Following activation by ligand, interacts with the PI3-kinase subunit PIK3R1, PLCG1, SRC, GRB2, STAT3 or the adapter GAB1. Recruitment of these downstream effectors by MET leads to the activation of several signaling cascades including the RAS-ERK, PI3 kinase-AKT, or PLCgamma-PKC. The RAS-ERK activation is associated with the morphogenetic effects while PI3K/AKT coordinates prosurvival effects. During embryonic development, MET signaling plays a role in gastrulation, development and migration of muscles and neuronal precursors, angiogenesis and kidney formation. In adults, participates in wound healing as well as organ regeneration and tissue remodeling. Also promotes differentiation and proliferation of hematopoietic cells. The sequence is that of Hepatocyte growth factor receptor (MET) from Mustela putorius furo (European domestic ferret).